Consider the following 1044-residue polypeptide: MPKREDISKILVIGSGPVVIGQAAEFDYSASQACRSLREEGYEVVLLNSNPATIQTDHEIADRVYIEPITVEAVETIIRKEEIDAIEPHMGGQTALNLVVSLKKMGIIDKYGIKIIGTPVESIEISEDRQKFHDFLISIGERDPERYRISRSNYKEEIEKIPFMPVIVRTSFSLGGSGGNIVKTKEELKAYAEELFRGIDEDYIEVNRSLAGLKELEYEMIRDSIGNCITVCNMENLDPMGVHTGESIVVTPSQTLSDIQYHMLRDAAIKIVSGLGIVGACNIQFALDGNDYYVVEVNPRTSRSSALASKATGYPIARIAAKIAVGYNLTEIRNPITKNTFAAFEPSLDYVTVKIPRWPFDKFSVDRTIGVQMKSIGEVMGIGRTFEEALMKAIASLDIDLSYRLRLYVSDEEIWNLVRTPNDRRIFAIFEALFRDFPVDRIMEESMYDRYFIEKMQNIVDYLKTLEFGHIPENLISLKKLGISDEIIGRTCGIDPDEITRYRITNRILPVFKEIDTCSGEFEVIAPYLYSTYEDEDELPGISGFVAIIGSGPNRIAQGLEFDYGAVKAITALRKMGVGSVMINSNPETVSTDFDVSDALFFEPITVEHVSNILAKANLRGLIVQFSGQTGQNIARRIENVLGSSVVMGTSSESIDRIEDRSLFSKRLEAMGIDQPKFEVATNAEEAINKSLALGLPVILRASHVIGGRAMDIIYDYDFLVERSREVFENVNSVLVSKYLENAVEIDVDFVSNGEDFQICGILVHIEEAGVHSGDATMIFGPKIVPQAAEEKIKSIVGKLVREFNLIGISNLQAAIKDDEVYVIELNARSSRSIPFISKATGYNWVELAVSAIMTGKLEKVSVSSKGYFVKVSVFPFSKFNDMDVSLGPEMKSTGEAMYPGFTMEEAIRKSILRDIKSVFISVRDDDKPRIIEAASIMKQNGLKIYATMGTSRYLRERGIECETVYRIKDERKPRIYDMILAGYIDLVINTPEMNAGSVRDGFKIRRLCVRKGIPLVTNINLANAYSKCLSYTNIDYREISSYH.

Positions 1–398 (MPKREDISKI…ALMKAIASLD (398 aa)) are carboxyphosphate synthetic domain. ATP-binding residues include Arg129, Arg169, Gly175, Gly176, Arg208, Leu210, Glu215, Gly241, Val242, His243, Gln284, and Glu296. One can recognise an ATP-grasp 1 domain in the interval 133-325 (HDFLISIGER…IARIAAKIAV (193 aa)). Residues Gln284, Glu296, and Asn298 each contribute to the Mg(2+) site. Residues Gln284, Glu296, and Asn298 each coordinate Mn(2+). Positions 399-539 (IDLSYRLRLY…YSTYEDEDEL (141 aa)) are oligomerization domain. Positions 540-916 (PGISGFVAII…AIRKSILRDI (377 aa)) are carbamoyl phosphate synthetic domain. Residues 665–854 (SKRLEAMGID…WVELAVSAIM (190 aa)) enclose the ATP-grasp 2 domain. Residues Arg701, Lys738, Leu740, Glu745, Gly770, Val771, His772, Ser773, Gln813, and Glu825 each contribute to the ATP site. Residues Gln813, Glu825, and Asn827 each contribute to the Mg(2+) site. Positions 813, 825, and 827 each coordinate Mn(2+). An MGS-like domain is found at 911–1044 (SILRDIKSVF…IDYREISSYH (134 aa)). An allosteric domain region spans residues 916–1044 (IKSVFISVRD…IDYREISSYH (129 aa)).

It belongs to the CarB family. Composed of two chains; the small (or glutamine) chain promotes the hydrolysis of glutamine to ammonia, which is used by the large (or ammonia) chain to synthesize carbamoyl phosphate. Tetramer of heterodimers (alpha,beta)4. The cofactor is Mg(2+). It depends on Mn(2+) as a cofactor.

It catalyses the reaction hydrogencarbonate + L-glutamine + 2 ATP + H2O = carbamoyl phosphate + L-glutamate + 2 ADP + phosphate + 2 H(+). It carries out the reaction hydrogencarbonate + NH4(+) + 2 ATP = carbamoyl phosphate + 2 ADP + phosphate + 2 H(+). It functions in the pathway amino-acid biosynthesis; L-arginine biosynthesis; carbamoyl phosphate from bicarbonate: step 1/1. The protein operates within pyrimidine metabolism; UMP biosynthesis via de novo pathway; (S)-dihydroorotate from bicarbonate: step 1/3. Large subunit of the glutamine-dependent carbamoyl phosphate synthetase (CPSase). CPSase catalyzes the formation of carbamoyl phosphate from the ammonia moiety of glutamine, carbonate, and phosphate donated by ATP, constituting the first step of 2 biosynthetic pathways, one leading to arginine and/or urea and the other to pyrimidine nucleotides. The large subunit (synthetase) binds the substrates ammonia (free or transferred from glutamine from the small subunit), hydrogencarbonate and ATP and carries out an ATP-coupled ligase reaction, activating hydrogencarbonate by forming carboxy phosphate which reacts with ammonia to form carbamoyl phosphate. The sequence is that of Carbamoyl phosphate synthase large chain from Thermoplasma volcanium (strain ATCC 51530 / DSM 4299 / JCM 9571 / NBRC 15438 / GSS1).